We begin with the raw amino-acid sequence, 360 residues long: MSDLSTLRQSYLDRISAAADGDALEQVRLAALGKKGEISGMMKELGRMTPEERQTTGAALNRLKDEIDAALRARKQGLEDAALDARLKEEWLDVTLPGRPRPQGTIHPISQVTEEVTAIFADMGFRVAEGPQIESDWFNFDALNIPPEHPARQEHDTFFMARAGDDPRPPQVLRTHTSPVQIRAMQATGAPIRVICPGRVYRMDMDQTHTPMFHQVEGLALGKDISMANLKWTLEEFCRAFFEVDEVELRFRASHFPFTEPSAEVDIRCSWEGGKLTIGQGESWLEILGSGMVHPKVLAAGGIDPEQWQGFAFGMGIDRIAMLKYGIPDLRAFFESDLRWLRHYGFAAGDVPSVAGGLSR.

A Mg(2+)-binding site is contributed by Glu260.

It belongs to the class-II aminoacyl-tRNA synthetase family. Phe-tRNA synthetase alpha subunit type 1 subfamily. As to quaternary structure, tetramer of two alpha and two beta subunits. Mg(2+) serves as cofactor.

It localises to the cytoplasm. The catalysed reaction is tRNA(Phe) + L-phenylalanine + ATP = L-phenylalanyl-tRNA(Phe) + AMP + diphosphate + H(+). The protein is Phenylalanine--tRNA ligase alpha subunit of Paracoccus denitrificans (strain Pd 1222).